The following is an 87-amino-acid chain: Large ribosomal subunit protein bL31B (87 aa).

This sequence belongs to the bacterial ribosomal protein bL31 family. Type B subfamily. As to quaternary structure, part of the 50S ribosomal subunit.

The chain is Large ribosomal subunit protein bL31B from Burkholderia ambifaria (strain MC40-6).